The following is a 238-amino-acid chain: Doublecortin domain-containing protein (238 aa).

Positions 82–112 are partial p25alpha domain; it reads VFERLNDKQFYTGVQKTKFMELLKNNKNKSS. Residues 151-232 form the Doublecortin domain; the sequence is KTIFLFNNEK…GDPPAPIRNL (82 aa).

As to quaternary structure, interacts with alpha-tubulin 1 and beta-tubulin; the interaction stabilizes microtubule assembly.

Its subcellular location is the cytoplasm. The protein resides in the cytoskeleton. Involved in the stabilization of microtubules. Probably by controlling microtubules stabilization, plays a role in invasion, microneme secretion and parasite growth in host erythrocytes. The polypeptide is Doublecortin domain-containing protein (Plasmodium falciparum (isolate 3D7)).